The primary structure comprises 175 residues: NADH-ubiquinone oxidoreductase chain 6 (175 aa).

5 consecutive transmembrane segments (helical) span residues 1–21, 24–44, 46–66, 86–106, and 149–169; these read MMYTVFVMSVLFVVGFVGVSS, SPVYGGLGLVASGGVGCGIVV, FGGSFLGLMVFLVYLGGMMVV, IVVLGALVGGLLMEGAAVVYL, and YGCWFMVMSGWMLFISVFIVI.

This sequence belongs to the complex I subunit 6 family. Core subunit of respiratory chain NADH dehydrogenase (Complex I) which is composed of 45 different subunits.

The protein localises to the mitochondrion inner membrane. It carries out the reaction a ubiquinone + NADH + 5 H(+)(in) = a ubiquinol + NAD(+) + 4 H(+)(out). Its function is as follows. Core subunit of the mitochondrial membrane respiratory chain NADH dehydrogenase (Complex I) which catalyzes electron transfer from NADH through the respiratory chain, using ubiquinone as an electron acceptor. Essential for the catalytic activity and assembly of complex I. In Dugong dugon (Dugong), this protein is NADH-ubiquinone oxidoreductase chain 6 (MT-ND6).